We begin with the raw amino-acid sequence, 860 residues long: MYSGAGPVLASPAPTTSPIPGYAFKPPPRPDFGTTGRTIKLQANFFEMDIPKIDIYHYELDIKPEKCPRRVNREIVEHMVQHFKTQIFGDRKPVFDGRKNLYTAMPLPIGRDKVELEVTLPGEGKDRIFKVSIKWVSCVSLQALHDALSGRLPSVPFETIQALDVVMRHLPSMRYTPVGRSFFTASEGCSNPLGGGREVWFGFHQSVRPSLWKMMLNIDVSATAFYKAQPVIEFVCEVLDFKSIEEQQKPLTDSQRVKFTKEIKGLKVEITHCGQMKRKYRVCNVTRRPASHQTFPLQQESGQTVECTVAQYFKDRHKLVLRYPHLPCLQVGQEQKHTYLPLEVCNIVAGQRCIKKLTDNQTSTMIRATARSAPDRQEEISKLMRSASFNTDPYVREFGIMVKDEMTDVTGRVLQPPSILYGGRNKAIATPVQGVWDMRNKQFHTGIEIKVWAIACFAPQRQCTEVHLKSFTEQLRKISRDAGMPIQGQPCFCKYAQGADSVEPMFRHLKNTYAGLQLVVVILPGKTPVYAEVKRVGDTVLGMATQCVQMKNVQRTTPQTLSNLCLKINVKLGGVNNILLPQGRPPVFQQPVIFLGADVTHPPAGDGKKPSIAAVVGSMDAHPNRYCATVRVQQHRQEIIQDLAAMVRELLIQFYKSTRFKPTRIIFYRDGVSEGQFQQVLHHELLAIREACIKLEKEYQPGITFIVVQKRHHTRLFCTDKNERVGKSGNIPAGTTVDTKITHPTEFDFYLCSHAGIQGTSRPSHYHVLWDDNRFSSDELQILTYQLCHTYVRCTRSVSIPAPAYYAHLVAFRARYHLVDKEHDSAEGSHTSGQSNGRDHQALAKAVQVHQDTLRTMYFA.

Residue Tyr2 is modified to 3'-nitrotyrosine. In terms of domain architecture, PAZ spans 230 to 349 (PVIEFVCEVL…LPLEVCNIVA (120 aa)). Residues 312-317 (YFKDRH) are interaction with guide RNA. Ser388 is modified (phosphoserine). The 302-residue stretch at 518–819 (LVVVILPGKT…VAFRARYHLV (302 aa)) folds into the Piwi domain. The tract at residues 525–567 (GKTPVYAEVKRVGDTVLGMATQCVQMKNVQRTTPQTLSNLCLK) is interaction with guide RNA. The segment at 588–591 (FQQP) is interaction with GW182 family members. Residue Asp598 participates in a divalent metal cation binding. The tract at residues 651–661 (LIQFYKSTRFK) is interaction with GW182 family members. Residue Asp670 coordinates a divalent metal cation. Pro701 bears the 4-hydroxyproline mark. Interaction with guide RNA regions lie at residues 710–711 (KR), 754–762 (HAGIQGTSR), and 791–813 (YVRC…VAFR). An a divalent metal cation-binding site is contributed by His808. Phosphoserine occurs at positions 825, 829, 832, and 835.

It belongs to the argonaute family. Ago subfamily. In terms of assembly, interacts with DICER1 through its Piwi domain and with TARBP2 during assembly of the RNA-induced silencing complex (RISC). Together, DICER1, AGO2 and TARBP2 constitute the trimeric RISC loading complex (RLC), or micro-RNA (miRNA) loading complex (miRLC). Within the RLC/miRLC, DICER1 and TARBP2 are required to process precursor miRNAs (pre-miRNAs) to mature miRNAs and then load them onto AGO2. AGO2 bound to the mature miRNA constitutes the minimal RISC and may subsequently dissociate from DICER1 and TARBP2. Note however that the term RISC has also been used to describe the trimeric RLC/miRLC. The formation of RISC complexes containing siRNAs rather than miRNAs appears to occur independently of DICER1. Interacts with AGO1. Also interacts with DDB1, DDX5, DDX6, DDX20, DHX30, DHX36, DDX47, DHX9, ELAVL, FXR1, GEMIN4, HNRNPF, IGF2BP1, ILF3, IMP8, MATR3, PABPC1, PRMT5, P4HA1, P4HB, RBM4, SART3, TNRC6A, TNRC6B, UPF1 and YBX1. Interacts with the P-body components DCP1A and XRN1. Associates with polysomes and messenger ribonucleoproteins (mNRPs). Interacts with RBM4; the interaction is modulated under stress-induced conditions, occurs under both cell proliferation and differentiation conditions and in an RNA- and phosphorylation-independent manner. Interacts with LIMD1, WTIP and AJUBA. Interacts with TRIM71; the interaction increases in presence of RNA. Interacts with APOBEC3G in an RNA-dependent manner. Interacts with APOBEC3A, APOBEC3C, APOBEC3F and APOBEC3H. Interacts with DICER1, TARBP2, EIF6, MOV10 and RPL7A (60S ribosome subunit); they form a large RNA-induced silencing complex (RISC). Interacts with FMR1. Interacts with ZFP36. Interacts with RC3H1; the interaction is RNA independent. Found in a complex, composed of AGO2, CHD7 and ARB2A. Interacts with SND1 and SYT11. Interacts with CLNK. Interacts with GARRE1. Interacts with GRB2; this interaction is important for the formation of a ternary complex containing GRB2, AGO2 and DICER1. It depends on Mg(2+) as a cofactor. Mn(2+) is required as a cofactor. Post-translationally, hydroxylated. 4-hydroxylation appears to enhance protein stability but is not required for miRNA-binding or endonuclease activity. Ubiquitinated on surface-exposed lysines by a SCF-like E3 ubiquitin-protein ligase complex containing ZSWIM8 during target-directed microRNA degradation (TDMD), a process that mediates degradation of microRNAs (miRNAs). Ubiquitination by the SCF-like E3 ubiquitin-protein ligase complex containing ZSWIM8 leads to its subsequent degradation, thereby exposing miRNAs for degradation. ZSWIM8 recognizes and binds AGO2 when it is engaged with a TDMD target. In terms of processing, phosphorylation at Ser-388 by AKT3; leads to up-regulate translational repression of microRNA target and down-regulate endonucleolytic cleavage. Post-translationally, a phosphorylation cycle of C-terminal serine cluster (Ser-825-Ser-835) regulates the release of target mRNAs. Target-binding leads to phosphorylation of these residues by CSNK1A1, which reduces the affinity of AGO2 for mRNA and enables target release. The ANKRD52-PPP6C phosphatase complex dephosphorylates the residues, which primes AGO2 for binding a new target.

The protein localises to the cytoplasm. Its subcellular location is the P-body. It is found in the nucleus. The catalysed reaction is Endonucleolytic cleavage to 5'-phosphomonoester.. In terms of biological role, required for RNA-mediated gene silencing (RNAi) by the RNA-induced silencing complex (RISC). The 'minimal RISC' appears to include AGO2 bound to a short guide RNA such as a microRNA (miRNA) or short interfering RNA (siRNA). These guide RNAs direct RISC to complementary mRNAs that are targets for RISC-mediated gene silencing. The precise mechanism of gene silencing depends on the degree of complementarity between the miRNA or siRNA and its target. Binding of RISC to a perfectly complementary mRNA generally results in silencing due to endonucleolytic cleavage of the mRNA specifically by AGO2. Binding of RISC to a partially complementary mRNA results in silencing through inhibition of translation, and this is independent of endonuclease activity. May inhibit translation initiation by binding to the 7-methylguanosine cap, thereby preventing the recruitment of the translation initiation factor eIF4-E. May also inhibit translation initiation via interaction with EIF6, which itself binds to the 60S ribosomal subunit and prevents its association with the 40S ribosomal subunit. The inhibition of translational initiation leads to the accumulation of the affected mRNA in cytoplasmic processing bodies (P-bodies), where mRNA degradation may subsequently occur. In some cases RISC-mediated translational repression is also observed for miRNAs that perfectly match the 3' untranslated region (3'-UTR). Can also up-regulate the translation of specific mRNAs under certain growth conditions. Binds to the AU element of the 3'-UTR of the TNF (TNF-alpha) mRNA and up-regulates translation under conditions of serum starvation. Also required for transcriptional gene silencing (TGS), in which short RNAs known as antigene RNAs or agRNAs direct the transcriptional repression of complementary promoter regions. This Rattus norvegicus (Rat) protein is Protein argonaute-2 (Ago2).